We begin with the raw amino-acid sequence, 645 residues long: Glucans biosynthesis glucosyltransferase H (645 aa).

The disordered stretch occupies residues 1–28 (MDGTVTLSPAPTDLPPVSSLDAGQPTLP). A run of 7 helical transmembrane segments spans residues 64 to 84 (LIGG…SVLW), 98 to 118 (LFVL…AGFI), 423 to 443 (APMW…GAGI), 465 to 485 (AIWI…LGYI), 504 to 524 (ALSI…VMYL), 558 to 578 (SYGG…LVSP), and 580 to 600 (LAAW…VVAV).

Belongs to the glycosyltransferase 2 family. OpgH subfamily.

It localises to the cell inner membrane. It participates in glycan metabolism; osmoregulated periplasmic glucan (OPG) biosynthesis. In terms of biological role, involved in the biosynthesis of osmoregulated periplasmic glucans (OPGs). In Xanthomonas campestris pv. campestris (strain 8004), this protein is Glucans biosynthesis glucosyltransferase H.